Consider the following 511-residue polypeptide: Immunoglobulin-binding protein EibD (511 aa).

Residues 1–26 (MSKKFTMTLLSSSLAGLLVMSGGVSA) form the signal peptide. A surface exposed passenger domain region spans residues 27-417 (QNGTYSVLQD…SKAIAANTRT (391 aa)). At 27 to 460 (QNGTYSVLQD…GLFQPYSVGK (434 aa)) the chain is on the extracellular side. A head domain region spans residues 161 to 287 (DAKASGEFSV…TGTESDKTYG (127 aa)). The tract at residues 288-303 (TRVLGGLSDGTRNSDA) is neck. A right-handed coiled-coil (RHcc) region spans residues 304 to 349 (ATVGQLNRKVGGVYDDVKARITVESEKQKKYTDQKTSEVNEKVEAR). Residues 304–349 (ATVGQLNRKVGGVYDDVKARITVESEKQKKYTDQKTSEVNEKVEAR) are a coiled coil. A required to bind IgA region spans residues 329–344 (EKQKKYTDQKTSEVNE). The interval 350 to 375 (TTVGVDSDGKLTRAEGATKTIAVNDG) is saddle domain. A coiled-coil region spans residues 376–441 (LVALSGRTDR…INENHKEMKR (66 aa)). The interval 376–441 (LVALSGRTDR…INENHKEMKR (66 aa)) is left-handed coiled-coil (LHcc). Residues 384-418 (DRIDYAVGAIDGRVTRNTQSIEKNSKAIAANTRTL) are required to bind IgG. The interval 418–460 (LQQHSARLDSQQRQINENHKEMKRAAAQSAALTGLFQPYSVGK) is outer membrane translocation of the passenger domain. Beta stranded transmembrane passes span 461–471 (FNATAAVGGYS), 474–485 (QALAVGVGYRFN), 488–497 (TAAKAGVAFS), and 501–511 (ASWNVGVNFEF). The segment at 461–511 (FNATAAVGGYSDQQALAVGVGYRFNEQTAAKAGVAFSDGDASWNVGVNFEF) is translocator domain.

The protein belongs to the autotransporter-2 (AT-2) (TC 1.B.40) family. Eib subfamily. In terms of assembly, homotrimer; can probably form mixed heterotrimers in vivo. Will form mixed heterotrimers with EibA or EibC; these are correctly located in the outer membrane and bind IgG Fc, although less well than homotrimers. In denaturing gels runs as a band of about 210 kDa. Binds the Fc portion of immunoglobulins; binds more than 1 Fc per subunit, can be modeled to bind 3 Fc per trimer.

It localises to the cell surface. Its subcellular location is the cell outer membrane. Its function is as follows. Binds (in a non-immune fashion) to the Fc portion of human IgA and IgG; binding occurs on the cell surface. Confers the ability to survive exposure to human serum exposure. Binds to the Fc portion of human IgG, IgA and to whole mouse antibodies also via Fc. Upon overexpression cells acquire an extra cell surface layer that forms a zipper-like contact between cells; cells autoagglutinate and form biofilm more readily, suggesting it may play a role in defense against a host. This is Immunoglobulin-binding protein EibD from Escherichia coli.